The chain runs to 358 residues: Bis(monoacylglycero)phosphate synthase CLN5 (358 aa).

The segment at 1–23 (MAQVGSAGPGACGRRGAGAGAGP) is disordered. At 1–29 (MAQVGSAGPGACGRRGAGAGAGPERTTWR) the chain is on the cytoplasmic side. Over residues 7-21 (AGPGACGRRGAGAGA) the composition is skewed to gly residues. The helical; Signal-anchor for type II membrane protein transmembrane segment at 30 to 46 (WAPALLWLATAAAVAGD) threads the bilayer. Over 47 to 358 (PSRRQWPVPY…NRKNRTLSGL (312 aa)) the chain is Lumenal. Cystine bridges form between C69/C158 and C76/C164. H116 functions as the Proton acceptor in the catalytic mechanism. Residues N129, N142, N177, and N202 are each glycosylated (N-linked (GlcNAc...) asparagine). C230 functions as the Nucleophile; Acyl-thioester intermediate in the catalytic mechanism. 3 N-linked (GlcNAc...) asparagine glycosylation sites follow: N254, N270, and N280. Residues 303–342 (FLLSLLQIFDAVVIHREFYLFYNFEYWFLPMKYPFIKITY) are membrane-anchoring. Residue N352 is glycosylated (N-linked (GlcNAc...) asparagine).

This sequence belongs to the CLN5 family. In terms of assembly, multimer. Interacts with SORT1, RAB5A and RAB7A. Interacts with PPT1, TPP1, CLN3, CLN6, CLN8, ATP5F1A and ATP5F1B. N-glycosylated with both high mannose and complex type sugars. Glycosylation is important for proper folding and trafficking to the lysosomes. Post-translationally, the type II membrane signal anchor is proteolytically cleaved to produce a mature form that is transported to the lysosomes (Bis(monoacylglycero)phosphate synthase CLN5, secreted form). In terms of processing, can undergo proteolytic cleavage at the C-terminus, probably by a cysteine protease and may involve the removal of approximately 10-15 residues from the C-terminal end.

It is found in the lysosome. Its subcellular location is the membrane. It carries out the reaction S-hexadecanoyl-L-cysteinyl-[protein] + H2O = L-cysteinyl-[protein] + hexadecanoate + H(+). The catalysed reaction is 2 1-acyl-sn-glycero-3-phospho-(1'-sn-glycerol) = 1-acyl-sn-glycero-3-phospho-(3'-acyl-sn-1'-glycerol) + sn-glycero-3-phospho-(1'-sn-glycerol). The enzyme catalyses 2 1-(9Z-octadecenoyl)-sn-glycero-3-phospho-(1'-sn-glycerol) = 1-(9Z-octadecenoyl)-sn-glycero-3-phospho-(3'-(9Z-octadecenoyl)-1'-sn-glycerol) + sn-glycero-3-phospho-(1'-sn-glycerol). It catalyses the reaction 2 1-octadecanoyl-sn-glycero-3-phospho-(1'-sn-glycerol) = 1-octadecanoyl-sn-glycero-3-phospho-(3'-octadecanoyl-1'-sn-glycerol) + sn-glycero-3-phospho-(1'-sn-glycerol). It carries out the reaction 2 1-hexadecanoyl-sn-glycero-3-phospho-(1'-sn-glycerol) = 1-hexadecanoyl-sn-glycero-3-phospho-(3'-hexadecanoyl-1'-sn-glycerol) + sn-glycero-3-phospho-(1'-sn-glycerol). The catalysed reaction is 2 1-tetradecanoyl-sn-glycero-3-phospho-(1'-sn-glycerol) = 1-tetradecanoyl-sn-glycero-3-phospho-(3'-tetradecanoyl-1'-sn-glycerol) + sn-glycero-3-phospho-(1'-sn-glycerol). Catalyzes the synthesis of bis(monoacylglycero)phosphate (BMP) via transacylation of 2 molecules of lysophosphatidylglycerol (LPG). BMP also known as lysobisphosphatidic acid plays a key role in the formation of intraluminal vesicles and in maintaining intracellular cholesterol homeostasis. Can use only LPG as the exclusive lysophospholipid acyl donor for base exchange and displays BMP synthase activity towards various LPGs (LPG 14:0, LPG 16:0, LPG 18:0, LPG 18:1) with a higher preference for longer chain lengths. Plays a role in influencing the retrograde trafficking of lysosomal sorting receptors SORT1 and IGF2R from the endosomes to the trans-Golgi network by controlling the recruitment of retromer complex to the endosomal membrane. Regulates the localization and activation of RAB7A which is required to recruit the retromer complex to the endosomal membrane. Its function is as follows. Exhibits palmitoyl protein thioesterase (S-depalmitoylation) activity in vitro and most likely plays a role in protein S-depalmitoylation. This is Bis(monoacylglycero)phosphate synthase CLN5 (CLN5) from Bos taurus (Bovine).